Here is a 190-residue protein sequence, read N- to C-terminus: Hypoxanthine/guanine phosphoribosyltransferase (190 aa).

This sequence belongs to the purine/pyrimidine phosphoribosyltransferase family. Archaeal HPRT subfamily. In terms of assembly, homodimer.

It is found in the cytoplasm. The enzyme catalyses IMP + diphosphate = hypoxanthine + 5-phospho-alpha-D-ribose 1-diphosphate. The catalysed reaction is GMP + diphosphate = guanine + 5-phospho-alpha-D-ribose 1-diphosphate. It participates in purine metabolism; IMP biosynthesis via salvage pathway; IMP from hypoxanthine: step 1/1. Catalyzes a salvage reaction resulting in the formation of IMP that is energically less costly than de novo synthesis. The protein is Hypoxanthine/guanine phosphoribosyltransferase of Methanobacterium paludis (strain DSM 25820 / JCM 18151 / SWAN1).